The chain runs to 59 residues: Single-pass membrane and coiled-coil domain-containing protein 4 (59 aa).

A disordered region spans residues 1-23 (MRQLKGKPKKETSKDKKERKQAM). Basic and acidic residues predominate over residues 9 to 22 (KKETSKDKKERKQA). Residues 9–31 (KKETSKDKKERKQAMQEARQQIT) adopt a coiled-coil conformation. The helical transmembrane segment at 32–52 (TVVLPTLAVVVLLIVVFVYVA) threads the bilayer.

It belongs to the SMCO4 family.

The protein localises to the membrane. This chain is Single-pass membrane and coiled-coil domain-containing protein 4 (Smco4), found in Mus musculus (Mouse).